Consider the following 405-residue polypeptide: Cysteine desulfurase IscS (405 aa).

Pyridoxal 5'-phosphate-binding positions include 75 to 76 (AT), N155, Q183, and 203 to 205 (SGH). N6-(pyridoxal phosphate)lysine is present on K206. T243 lines the pyridoxal 5'-phosphate pocket. The active-site Cysteine persulfide intermediate is C329. C329 provides a ligand contact to [2Fe-2S] cluster.

It belongs to the class-V pyridoxal-phosphate-dependent aminotransferase family. NifS/IscS subfamily. Homodimer. Forms a heterotetramer with IscU, interacts with other sulfur acceptors. Pyridoxal 5'-phosphate serves as cofactor.

The protein localises to the cytoplasm. The enzyme catalyses (sulfur carrier)-H + L-cysteine = (sulfur carrier)-SH + L-alanine. Its pathway is cofactor biosynthesis; iron-sulfur cluster biosynthesis. Functionally, master enzyme that delivers sulfur to a number of partners involved in Fe-S cluster assembly, tRNA modification or cofactor biosynthesis. Catalyzes the removal of elemental sulfur atoms from cysteine to produce alanine. Functions as a sulfur delivery protein for Fe-S cluster synthesis onto IscU, an Fe-S scaffold assembly protein, as well as other S acceptor proteins. This is Cysteine desulfurase IscS from Pseudoalteromonas translucida (strain TAC 125).